The chain runs to 103 residues: Pyrimidine/purine nucleoside phosphorylase (103 aa).

This sequence belongs to the nucleoside phosphorylase PpnP family.

It carries out the reaction a purine D-ribonucleoside + phosphate = a purine nucleobase + alpha-D-ribose 1-phosphate. The catalysed reaction is adenosine + phosphate = alpha-D-ribose 1-phosphate + adenine. It catalyses the reaction cytidine + phosphate = cytosine + alpha-D-ribose 1-phosphate. The enzyme catalyses guanosine + phosphate = alpha-D-ribose 1-phosphate + guanine. It carries out the reaction inosine + phosphate = alpha-D-ribose 1-phosphate + hypoxanthine. The catalysed reaction is thymidine + phosphate = 2-deoxy-alpha-D-ribose 1-phosphate + thymine. It catalyses the reaction uridine + phosphate = alpha-D-ribose 1-phosphate + uracil. The enzyme catalyses xanthosine + phosphate = alpha-D-ribose 1-phosphate + xanthine. Its function is as follows. Catalyzes the phosphorolysis of diverse nucleosides, yielding D-ribose 1-phosphate and the respective free bases. Can use uridine, adenosine, guanosine, cytidine, thymidine, inosine and xanthosine as substrates. Also catalyzes the reverse reactions. In Shewanella sp. (strain MR-4), this protein is Pyrimidine/purine nucleoside phosphorylase.